The chain runs to 316 residues: Short-chain dehydrogenase/reductase family 16C member 6 (316 aa).

40–64 (LITGAASGLGRLLAIKFASLGAILV) contributes to the NAD(+) binding site. A substrate-binding site is contributed by S173. Catalysis depends on Y186, which acts as the Proton acceptor.

Belongs to the short-chain dehydrogenases/reductases (SDR) family.

The sequence is that of Short-chain dehydrogenase/reductase family 16C member 6 (SDR16C6) from Bos taurus (Bovine).